The chain runs to 326 residues: Alkanal monooxygenase beta chain (326 aa).

Belongs to the bacterial luciferase oxidoreductase family. In terms of assembly, heterodimer of an alpha and a beta chain.

It catalyses the reaction a long-chain fatty aldehyde + FMNH2 + O2 = a long-chain fatty acid + hnu + FMN + H2O + 2 H(+). In terms of biological role, light-emitting reaction in luminous bacteria. The specific role of the beta subunit is unknown, but it is absolutely required for bioluminescence activity. This is Alkanal monooxygenase beta chain (luxB) from Photobacterium leiognathi.